A 227-amino-acid chain; its full sequence is Ribose-5-phosphate isomerase A (227 aa).

Residues 26–29, 82–85, and 95–98 each bind substrate; these read TGST, DGAD, and KGGG. E104 functions as the Proton acceptor in the catalytic mechanism. K122 is a substrate binding site.

The protein belongs to the ribose 5-phosphate isomerase family. In terms of assembly, homodimer.

It carries out the reaction aldehydo-D-ribose 5-phosphate = D-ribulose 5-phosphate. It functions in the pathway carbohydrate degradation; pentose phosphate pathway; D-ribose 5-phosphate from D-ribulose 5-phosphate (non-oxidative stage): step 1/1. Its function is as follows. Catalyzes the reversible conversion of ribose-5-phosphate to ribulose 5-phosphate. The sequence is that of Ribose-5-phosphate isomerase A from Streptococcus pneumoniae serotype 4 (strain ATCC BAA-334 / TIGR4).